A 492-amino-acid polypeptide reads, in one-letter code: 6-phosphogluconate dehydrogenase, decarboxylating 2 (492 aa).

NADP(+) contacts are provided by residues 12 to 17 (GLAVMG), 35 to 37 (NRT), 77 to 79 (IKA), and asparagine 105. Substrate-binding positions include asparagine 105 and 131–133 (SGG). Lysine 185 functions as the Proton acceptor in the catalytic mechanism. 188 to 189 (HN) contributes to the substrate binding site. Catalysis depends on glutamate 192, which acts as the Proton donor. Residues tyrosine 193, lysine 262, arginine 289, arginine 449, and histidine 455 each contribute to the substrate site.

This sequence belongs to the 6-phosphogluconate dehydrogenase family. As to quaternary structure, homodimer.

The enzyme catalyses 6-phospho-D-gluconate + NADP(+) = D-ribulose 5-phosphate + CO2 + NADPH. It participates in carbohydrate degradation; pentose phosphate pathway; D-ribulose 5-phosphate from D-glucose 6-phosphate (oxidative stage): step 3/3. Functionally, catalyzes the oxidative decarboxylation of 6-phosphogluconate to ribulose 5-phosphate and CO(2), with concomitant reduction of NADP to NADPH. This chain is 6-phosphogluconate dehydrogenase, decarboxylating 2 (GND2), found in Saccharomyces cerevisiae (strain ATCC 204508 / S288c) (Baker's yeast).